Reading from the N-terminus, the 340-residue chain is MTELQPIAVLGGGSFGTALANLLAENGQRVLQWMRDPEQAGQMRRSGENPRYLKGVKLHPGIEPTSDLGAALQQAELVFVALPSSALRDALQPVAAQLSGKMLVSTTKGIEARTFKLMSEILEEIAPDARIGVLSGPNLAKEVADHALTATVIASEDEELCLRVQQALHGRTFRVYASADRFGVELGGALKNVYAIMSGMAAALGMGENTKSMLITRALAEMTRFAVKLGANPMTFLGLAGVGDLIVTCSSPKSRNYQVGFALGEGLSLDEAVQRLGEVAEGVNTLKVLKARAEELEVYMPLVAGLHAVLFEGRTLAQVIELLMRGEPKTDVDFIPTAGF.

Residues S14, F15, R35, and K108 each contribute to the NADPH site. Sn-glycerol 3-phosphate-binding residues include K108 and G136. An NADPH-binding site is contributed by A140. Positions 191, 244, 254, 255, and 256 each coordinate sn-glycerol 3-phosphate. K191 serves as the catalytic Proton acceptor. NADPH is bound at residue R255. V279 and E281 together coordinate NADPH.

The protein belongs to the NAD-dependent glycerol-3-phosphate dehydrogenase family.

Its subcellular location is the cytoplasm. The enzyme catalyses sn-glycerol 3-phosphate + NAD(+) = dihydroxyacetone phosphate + NADH + H(+). It catalyses the reaction sn-glycerol 3-phosphate + NADP(+) = dihydroxyacetone phosphate + NADPH + H(+). It participates in membrane lipid metabolism; glycerophospholipid metabolism. In terms of biological role, catalyzes the reduction of the glycolytic intermediate dihydroxyacetone phosphate (DHAP) to sn-glycerol 3-phosphate (G3P), the key precursor for phospholipid synthesis. In Ectopseudomonas mendocina (strain ymp) (Pseudomonas mendocina), this protein is Glycerol-3-phosphate dehydrogenase [NAD(P)+].